The chain runs to 216 residues: Glycerol-3-phosphate acyltransferase (216 aa).

Transmembrane regions (helical) follow at residues 5–25, 70–90, 118–138, 140–160, and 164–184; these read LIAL…FGLV, IAAA…AGAF, VVFW…AAIF, ISSL…LAWG, and VAIM…ANIS. Over residues 192-201 the composition is skewed to basic and acidic residues; the sequence is PRIGGKKSET. The tract at residues 192 to 216 is disordered; sequence PRIGGKKSETSADVSDGDDPDTPAT. A compositionally biased stretch (acidic residues) spans 206 to 216; it reads SDGDDPDTPAT.

The protein belongs to the PlsY family. In terms of assembly, probably interacts with PlsX.

Its subcellular location is the cell inner membrane. The enzyme catalyses an acyl phosphate + sn-glycerol 3-phosphate = a 1-acyl-sn-glycero-3-phosphate + phosphate. Its pathway is lipid metabolism; phospholipid metabolism. Catalyzes the transfer of an acyl group from acyl-phosphate (acyl-PO(4)) to glycerol-3-phosphate (G3P) to form lysophosphatidic acid (LPA). This enzyme utilizes acyl-phosphate as fatty acyl donor, but not acyl-CoA or acyl-ACP. The chain is Glycerol-3-phosphate acyltransferase from Maricaulis maris (strain MCS10) (Caulobacter maris).